A 196-amino-acid polypeptide reads, in one-letter code: N-(5'-phosphoribosyl)anthranilate isomerase (196 aa).

This sequence belongs to the TrpF family.

The catalysed reaction is N-(5-phospho-beta-D-ribosyl)anthranilate = 1-(2-carboxyphenylamino)-1-deoxy-D-ribulose 5-phosphate. The protein operates within amino-acid biosynthesis; L-tryptophan biosynthesis; L-tryptophan from chorismate: step 3/5. The protein is N-(5'-phosphoribosyl)anthranilate isomerase of Sulfurovum sp. (strain NBC37-1).